The sequence spans 69 residues: uncharacterized protein (69 aa).

A helical transmembrane segment spans residues 13–35 (IRSINPTLLNFINYFLLIVPQFI).

It localises to the membrane. This is an uncharacterized protein from Saccharomyces cerevisiae (strain ATCC 204508 / S288c) (Baker's yeast).